A 1399-amino-acid polypeptide reads, in one-letter code: DNA-directed RNA polymerase subunit beta' (1399 aa).

Zn(2+) contacts are provided by Cys70, Cys72, Cys85, and Cys88. Asp460, Asp462, and Asp464 together coordinate Mg(2+). Zn(2+) is bound by residues Cys814, Cys888, Cys895, and Cys898.

This sequence belongs to the RNA polymerase beta' chain family. As to quaternary structure, the RNAP catalytic core consists of 2 alpha, 1 beta, 1 beta' and 1 omega subunit. When a sigma factor is associated with the core the holoenzyme is formed, which can initiate transcription. Mg(2+) serves as cofactor. It depends on Zn(2+) as a cofactor.

It catalyses the reaction RNA(n) + a ribonucleoside 5'-triphosphate = RNA(n+1) + diphosphate. Functionally, DNA-dependent RNA polymerase catalyzes the transcription of DNA into RNA using the four ribonucleoside triphosphates as substrates. This is DNA-directed RNA polymerase subunit beta' from Pseudomonas fluorescens (strain Pf0-1).